Consider the following 1416-residue polypeptide: DNA-directed RNA polymerase subunit beta' (1416 aa).

Residues C71, C73, C86, and C89 each coordinate Zn(2+). Mg(2+) contacts are provided by D461, D463, and D465. Residues C815, C889, C896, and C899 each coordinate Zn(2+).

Belongs to the RNA polymerase beta' chain family. The RNAP catalytic core consists of 2 alpha, 1 beta, 1 beta' and 1 omega subunit. When a sigma factor is associated with the core the holoenzyme is formed, which can initiate transcription. The cofactor is Mg(2+). Zn(2+) is required as a cofactor.

It catalyses the reaction RNA(n) + a ribonucleoside 5'-triphosphate = RNA(n+1) + diphosphate. In terms of biological role, DNA-dependent RNA polymerase catalyzes the transcription of DNA into RNA using the four ribonucleoside triphosphates as substrates. The protein is DNA-directed RNA polymerase subunit beta' of Haemophilus influenzae (strain 86-028NP).